A 312-amino-acid chain; its full sequence is Glycine--tRNA ligase alpha subunit (312 aa).

Belongs to the class-II aminoacyl-tRNA synthetase family. Tetramer of two alpha and two beta subunits.

It localises to the cytoplasm. It carries out the reaction tRNA(Gly) + glycine + ATP = glycyl-tRNA(Gly) + AMP + diphosphate. The protein is Glycine--tRNA ligase alpha subunit (glyQ) of Buchnera aphidicola subsp. Acyrthosiphon pisum (strain APS) (Acyrthosiphon pisum symbiotic bacterium).